A 252-amino-acid polypeptide reads, in one-letter code: Phosphoglycolate phosphatase (252 aa).

Catalysis depends on D13, which acts as the Nucleophile. 3 residues coordinate Mg(2+): D13, D15, and D192.

It belongs to the HAD-like hydrolase superfamily. CbbY/CbbZ/Gph/YieH family. Monomer. Mg(2+) serves as cofactor. It depends on chloride as a cofactor.

The catalysed reaction is 2-phosphoglycolate + H2O = glycolate + phosphate. It participates in organic acid metabolism; glycolate biosynthesis; glycolate from 2-phosphoglycolate: step 1/1. Specifically catalyzes the dephosphorylation of 2-phosphoglycolate. Is involved in the dissimilation of the intracellular 2-phosphoglycolate formed during the DNA repair of 3'-phosphoglycolate ends, a major class of DNA lesions induced by oxidative stress. The sequence is that of Phosphoglycolate phosphatase from Salmonella typhi.